A 432-amino-acid chain; its full sequence is Adenylosuccinate synthetase (432 aa).

Residues 13–19 (GDEGKGK) and 41–43 (GHT) contribute to the GTP site. Asp14 serves as the catalytic Proton acceptor. Mg(2+) is bound by residues Asp14 and Gly41. IMP is bound by residues 14–17 (DEGK), 39–42 (NAGH), Thr130, Arg144, Gln225, Thr240, and Arg304. Residue His42 is the Proton donor of the active site. 300 to 306 (ATTGRRR) is a binding site for substrate. GTP-binding positions include Arg306, 332-334 (KLD), and 415-417 (STG).

Belongs to the adenylosuccinate synthetase family. In terms of assembly, homodimer. It depends on Mg(2+) as a cofactor.

It localises to the cytoplasm. It carries out the reaction IMP + L-aspartate + GTP = N(6)-(1,2-dicarboxyethyl)-AMP + GDP + phosphate + 2 H(+). The protein operates within purine metabolism; AMP biosynthesis via de novo pathway; AMP from IMP: step 1/2. In terms of biological role, plays an important role in the de novo pathway of purine nucleotide biosynthesis. Catalyzes the first committed step in the biosynthesis of AMP from IMP. This Sodalis glossinidius (strain morsitans) protein is Adenylosuccinate synthetase.